A 217-amino-acid chain; its full sequence is Uracil-DNA glycosylase (217 aa).

The active-site Proton acceptor is Asp-62.

It belongs to the uracil-DNA glycosylase (UDG) superfamily. UNG family.

It localises to the cytoplasm. The enzyme catalyses Hydrolyzes single-stranded DNA or mismatched double-stranded DNA and polynucleotides, releasing free uracil.. Its function is as follows. Excises uracil residues from the DNA which can arise as a result of misincorporation of dUMP residues by DNA polymerase or due to deamination of cytosine. The chain is Uracil-DNA glycosylase from Streptococcus pyogenes serotype M28 (strain MGAS6180).